A 394-amino-acid polypeptide reads, in one-letter code: S-adenosylmethionine synthase 1 (394 aa).

Residue Glu-11 coordinates Mg(2+). His-17 contacts ATP. Glu-45 is a binding site for K(+). L-methionine-binding residues include Glu-58 and Gln-101. ATP contacts are provided by residues 169–171 (DGK), 237–240 (SGRF), Asp-248, 254–255 (RK), Ala-271, Lys-275, and Lys-279. Position 248 (Asp-248) interacts with L-methionine. Lys-279 contacts L-methionine.

It belongs to the AdoMet synthase family. In terms of assembly, homotetramer. It depends on Mn(2+) as a cofactor. Requires Mg(2+) as cofactor. Co(2+) serves as cofactor. K(+) is required as a cofactor.

It localises to the cytoplasm. It carries out the reaction L-methionine + ATP + H2O = S-adenosyl-L-methionine + phosphate + diphosphate. The protein operates within amino-acid biosynthesis; S-adenosyl-L-methionine biosynthesis; S-adenosyl-L-methionine from L-methionine: step 1/1. Functionally, catalyzes the formation of S-adenosylmethionine from methionine and ATP. The reaction comprises two steps that are both catalyzed by the same enzyme: formation of S-adenosylmethionine (AdoMet) and triphosphate, and subsequent hydrolysis of the triphosphate. This is S-adenosylmethionine synthase 1 (SAMS1) from Triticum monococcum (Einkorn wheat).